A 227-amino-acid chain; its full sequence is Cytochrome c oxidase subunit 2 (227 aa).

The Mitochondrial intermembrane portion of the chain corresponds to 1 to 26 (MNTWMNFNLQNSNSPLMEQLMFFHNH). Residues 27–48 (SMLIILLITILVGYIMSSLLYN) form a helical membrane-spanning segment. Residues 49–62 (KLYNRYLLESQNVE) are Mitochondrial matrix-facing. Residues 63–82 (IIWTILPAFMLIFIALPSLR) form a helical membrane-spanning segment. Over 83-227 (LLYLLDDSNS…SFIKWISSNS (145 aa)) the chain is Mitochondrial intermembrane. Residues histidine 161, cysteine 196, glutamate 198, cysteine 200, histidine 204, and methionine 207 each coordinate Cu cation. Mg(2+) is bound at residue glutamate 198.

This sequence belongs to the cytochrome c oxidase subunit 2 family. In terms of assembly, component of the cytochrome c oxidase (complex IV, CIV), a multisubunit enzyme composed of a catalytic core of 3 subunits and several supernumerary subunits. The complex exists as a monomer or a dimer and forms supercomplexes (SCs) in the inner mitochondrial membrane with ubiquinol-cytochrome c oxidoreductase (cytochrome b-c1 complex, complex III, CIII). The cofactor is Cu cation.

The protein resides in the mitochondrion inner membrane. The catalysed reaction is 4 Fe(II)-[cytochrome c] + O2 + 8 H(+)(in) = 4 Fe(III)-[cytochrome c] + 2 H2O + 4 H(+)(out). Its function is as follows. Component of the cytochrome c oxidase, the last enzyme in the mitochondrial electron transport chain which drives oxidative phosphorylation. The respiratory chain contains 3 multisubunit complexes succinate dehydrogenase (complex II, CII), ubiquinol-cytochrome c oxidoreductase (cytochrome b-c1 complex, complex III, CIII) and cytochrome c oxidase (complex IV, CIV), that cooperate to transfer electrons derived from NADH and succinate to molecular oxygen, creating an electrochemical gradient over the inner membrane that drives transmembrane transport and the ATP synthase. Cytochrome c oxidase is the component of the respiratory chain that catalyzes the reduction of oxygen to water. Electrons originating from reduced cytochrome c in the intermembrane space (IMS) are transferred via the dinuclear copper A center (CU(A)) of subunit 2 and heme A of subunit 1 to the active site in subunit 1, a binuclear center (BNC) formed by heme A3 and copper B (CU(B)). The BNC reduces molecular oxygen to 2 water molecules using 4 electrons from cytochrome c in the IMS and 4 protons from the mitochondrial matrix. This Ctenocephalides felis (Cat flea) protein is Cytochrome c oxidase subunit 2 (COII).